The primary structure comprises 579 residues: Arginine--tRNA ligase (579 aa).

The 'HIGH' region motif lies at 127–137; that stretch reads PNLAKEMHVGH.

Belongs to the class-I aminoacyl-tRNA synthetase family. In terms of assembly, monomer.

Its subcellular location is the cytoplasm. It catalyses the reaction tRNA(Arg) + L-arginine + ATP = L-arginyl-tRNA(Arg) + AMP + diphosphate. The protein is Arginine--tRNA ligase of Stutzerimonas stutzeri (strain A1501) (Pseudomonas stutzeri).